A 71-amino-acid polypeptide reads, in one-letter code: uncharacterized protein (71 aa).

The helical transmembrane segment at 37-57 (IGVGVSDGVSAGVGVGVAMII) threads the bilayer.

The protein resides in the membrane. This is an uncharacterized protein from Dictyostelium discoideum (Social amoeba).